The following is a 325-amino-acid chain: tRNA dimethylallyltransferase (325 aa).

16-23 contacts ATP; that stretch reads GPTASGKT. 18-23 provides a ligand contact to substrate; sequence TASGKT. Interaction with substrate tRNA stretches follow at residues 41–44, 165–169, 253–258, and 286–293; these read DSAL, QRIQR, RCVGYR, and KRQITWLR.

The protein belongs to the IPP transferase family. Monomer. The cofactor is Mg(2+).

The enzyme catalyses adenosine(37) in tRNA + dimethylallyl diphosphate = N(6)-dimethylallyladenosine(37) in tRNA + diphosphate. Functionally, catalyzes the transfer of a dimethylallyl group onto the adenine at position 37 in tRNAs that read codons beginning with uridine, leading to the formation of N6-(dimethylallyl)adenosine (i(6)A). The protein is tRNA dimethylallyltransferase of Ralstonia pickettii (strain 12J).